Consider the following 710-residue polypeptide: Cyclomaltodextrin glucanotransferase (710 aa).

The N-terminal stretch at 1–27 is a signal peptide; sequence MKKTFKLILVLMLSLTLVFGLTAPIQA. Asp54, Asn56, Asn59, Asn60, Gly78, and Asp80 together coordinate Ca(2+). 128 to 129 provides a ligand contact to substrate; it reads YW. Asn167 serves as a coordination point for Ca(2+). A substrate-binding site is contributed by His168. A Ca(2+)-binding site is contributed by Ile218. 221 to 224 contributes to the substrate binding site; that stretch reads NLFD. Asp227 provides a ligand contact to Ca(2+). Arg255 is a binding site for substrate. Asp257 serves as the catalytic Nucleophile. Residue 260-261 coordinates substrate; sequence KH. His261 is a Ca(2+) binding site. Residue Glu285 is the Proton donor of the active site. Substrate contacts are provided by His355, Asp398, and Arg402. The IPT/TIG domain maps to 526–603; sequence PLIGHVGPTM…GATSNTYNNI (78 aa). The 106-residue stretch at 605-710 folds into the CBM20 domain; the sequence is ILTGNQICVR…TGTVIVNWQQ (106 aa).

This sequence belongs to the glycosyl hydrolase 13 family. The cofactor is Ca(2+).

It localises to the secreted. The enzyme catalyses Cyclizes part of a (1-&gt;4)-alpha-D-glucan chain by formation of a (1-&gt;4)-alpha-D-glucosidic bond.. Its function is as follows. Degrades starch to alpha-, beta-, and gamma-cyclodextrins, as well as linear sugars. The polypeptide is Cyclomaltodextrin glucanotransferase (amyA) (Thermoanaerobacterium thermosulfurigenes (Clostridium thermosulfurogenes)).